The following is a 212-amino-acid chain: Ribonuclease HII (212 aa).

The region spanning 28-212 (SIIAGVDEVG…KSFAPIRQVV (185 aa)) is the RNase H type-2 domain. Residues Asp-34, Glu-35, and Asp-127 each coordinate a divalent metal cation.

Belongs to the RNase HII family. Requires Mn(2+) as cofactor. It depends on Mg(2+) as a cofactor.

The protein localises to the cytoplasm. It catalyses the reaction Endonucleolytic cleavage to 5'-phosphomonoester.. Its function is as follows. Endonuclease that specifically degrades the RNA of RNA-DNA hybrids. This is Ribonuclease HII from Chlamydia caviae (strain ATCC VR-813 / DSM 19441 / 03DC25 / GPIC) (Chlamydophila caviae).